The primary structure comprises 159 residues: Protein-export protein SecB (159 aa).

This sequence belongs to the SecB family. In terms of assembly, homotetramer, a dimer of dimers. One homotetramer interacts with 1 SecA dimer.

It is found in the cytoplasm. In terms of biological role, one of the proteins required for the normal export of preproteins out of the cell cytoplasm. It is a molecular chaperone that binds to a subset of precursor proteins, maintaining them in a translocation-competent state. It also specifically binds to its receptor SecA. The sequence is that of Protein-export protein SecB from Burkholderia mallei (strain NCTC 10229).